Consider the following 45-residue polypeptide: Globin, minor monomeric component (45 aa).

Positions 1–45 (GLSAAERQVVASCWKDIAGADXGAGVGKEXLIKFISAAPEMAAVF) constitute a Globin domain.

Belongs to the globin family. In terms of assembly, monomer.

In Glycera dibranchiata (Bloodworm), this protein is Globin, minor monomeric component.